A 141-amino-acid polypeptide reads, in one-letter code: Universal stress protein A homolog (141 aa).

Belongs to the universal stress protein A family. As to quaternary structure, homodimer.

It is found in the cytoplasm. Required for resistance to DNA-damaging agents. The chain is Universal stress protein A homolog (uspA) from Pasteurella multocida (strain Pm70).